The following is a 220-amino-acid chain: Redox-sensing transcriptional repressor Rex (220 aa).

The segment at residues 17–56 (LYARSLRYLLQEGVESVSSQELGDRINVTAAQIRKDLSYF) is a DNA-binding region (H-T-H motif). Residue 91 to 96 (GIGHLG) coordinates NAD(+).

It belongs to the transcriptional regulatory Rex family. Homodimer.

It is found in the cytoplasm. Its function is as follows. Modulates transcription in response to changes in cellular NADH/NAD(+) redox state. The polypeptide is Redox-sensing transcriptional repressor Rex (Roseiflexus sp. (strain RS-1)).